The following is a 331-amino-acid chain: GTP 3',8-cyclase (331 aa).

A Radical SAM core domain is found at 6–231 (PFGRTISYLR…TDIPFKTGGP (226 aa)). Residue Arg-15 coordinates GTP. [4Fe-4S] cluster contacts are provided by Cys-22 and Cys-26. Tyr-28 contacts S-adenosyl-L-methionine. Cys-29 serves as a coordination point for [4Fe-4S] cluster. Arg-64 is a binding site for GTP. Gly-68 contacts S-adenosyl-L-methionine. GTP is bound at residue Thr-98. Ser-122 contacts S-adenosyl-L-methionine. Lys-158 lines the GTP pocket. Met-192 is an S-adenosyl-L-methionine binding site. Cys-255 and Cys-258 together coordinate [4Fe-4S] cluster. GTP is bound at residue 260–262 (RVR). Position 272 (Cys-272) interacts with [4Fe-4S] cluster.

This sequence belongs to the radical SAM superfamily. MoaA family. As to quaternary structure, monomer and homodimer. [4Fe-4S] cluster serves as cofactor.

It catalyses the reaction GTP + AH2 + S-adenosyl-L-methionine = (8S)-3',8-cyclo-7,8-dihydroguanosine 5'-triphosphate + 5'-deoxyadenosine + L-methionine + A + H(+). It functions in the pathway cofactor biosynthesis; molybdopterin biosynthesis. Its function is as follows. Catalyzes the cyclization of GTP to (8S)-3',8-cyclo-7,8-dihydroguanosine 5'-triphosphate. In Mesorhizobium japonicum (strain LMG 29417 / CECT 9101 / MAFF 303099) (Mesorhizobium loti (strain MAFF 303099)), this protein is GTP 3',8-cyclase.